The following is a 288-amino-acid chain: MHLADFLAGSVGGAFGVAVGYPLDTVKVRLQTQTGYSGFWQCVRKTCRNEGLQGFYRGMSMPISTVSISSSLVFGTYRNILQFLHQLQHRSAGEPHHKAHIFLAGFTGGVTQVLVMAPADIVKVRLQCQTEPVQHISQESSSKYRGPVQCLLRIARDEGLLGLYKGSAALALRDGPSFATYFLTYNTICEILTTENQRPGWPVVLLAGGVSGMCGWAVGTPMDVIKSRLQVDGVSGRRYRGFLHCITHSVRTEGSGVLFRGLTVNCIRAFPVNMSVFAMYEAVVRLLR.

3 Solcar repeats span residues 1-83 (MHLA…ILQF), 99-191 (AHIF…ICEI), and 199-286 (PGWP…VVRL). Helical transmembrane passes span 3–23 (LADFLAGSVGGAFGVAVGYPL), 58–75 (GMSMPISTVSISSSLVFG), 101–121 (IFLAGFTGGVTQVLVMAPADI), 175–195 (GPSFATYFLTYNTICEILTTE), 199–219 (PGWPVVLLAGGVSGMCGWAVG), and 257–277 (VLFRGLTVNCIRAFPVNMSVF).

The protein belongs to the mitochondrial carrier (TC 2.A.29) family.

Its subcellular location is the mitochondrion inner membrane. This chain is Solute carrier family 25 member 47-B (slc25a47b), found in Danio rerio (Zebrafish).